Reading from the N-terminus, the 573-residue chain is Urease subunit alpha 2 (573 aa).

The 439-residue stretch at 135-573 (GGMDTHVHYI…ISLNQLYFFS (439 aa)) folds into the Urease domain. His140, His142, and Lys223 together coordinate Ni(2+). Lys223 is subject to N6-carboxylysine. His225 contributes to the substrate binding site. Ni(2+) is bound by residues His252 and His278. His326 acts as the Proton donor in catalysis. Asp366 lines the Ni(2+) pocket.

This sequence belongs to the metallo-dependent hydrolases superfamily. Urease alpha subunit family. As to quaternary structure, heterotrimer of UreA (gamma), UreB (beta) and UreC (alpha) subunits. Three heterotrimers associate to form the active enzyme. Ni cation serves as cofactor. In terms of processing, carboxylation allows a single lysine to coordinate two nickel ions.

It is found in the cytoplasm. The catalysed reaction is urea + 2 H2O + H(+) = hydrogencarbonate + 2 NH4(+). It participates in nitrogen metabolism; urea degradation; CO(2) and NH(3) from urea (urease route): step 1/1. Functionally, disrupting the ure2 operon has no effect on urease activity or pathogen survival in BALB/c mice when administered orally. This Brucella abortus (strain 2308) protein is Urease subunit alpha 2.